A 682-amino-acid polypeptide reads, in one-letter code: ATP-dependent zinc metalloprotease FtsH (682 aa).

Residues 1 to 7 (MKQSHKT) are Cytoplasmic-facing. Residues 8–28 (ILLWALLIFLFVMIYNLISDG) traverse the membrane as a helical segment. Residues 29–138 (TSGEETLDTT…YEVKAKEEST (110 aa)) are Periplasmic-facing. The chain crosses the membrane as a helical span at residues 139–159 (FWQSLLISWLPMLLLFALFFF). The Cytoplasmic portion of the chain corresponds to 160-682 (FMRQLQAGGG…SGTDPEPEPA (523 aa)). 232–239 (GPPGTGKT) lines the ATP pocket. His-454 is a Zn(2+) binding site. Glu-455 is a catalytic residue. 2 residues coordinate Zn(2+): His-458 and Asp-531. Residues 638–682 (LSRPAVVSKPSADAESSVDEDEREARPALFPPLGKSGTDPEPEPA) form a disordered region.

In the central section; belongs to the AAA ATPase family. It in the C-terminal section; belongs to the peptidase M41 family. Homohexamer. It depends on Zn(2+) as a cofactor.

Its subcellular location is the cell inner membrane. Its function is as follows. Acts as a processive, ATP-dependent zinc metallopeptidase for both cytoplasmic and membrane proteins. Plays a role in the quality control of integral membrane proteins. The polypeptide is ATP-dependent zinc metalloprotease FtsH (Haliangium ochraceum (strain DSM 14365 / JCM 11303 / SMP-2)).